A 70-amino-acid chain; its full sequence is Large ribosomal subunit protein bL31 (70 aa).

Residues Cys-16, Cys-18, Cys-37, and Cys-40 each coordinate Zn(2+).

This sequence belongs to the bacterial ribosomal protein bL31 family. Type A subfamily. In terms of assembly, part of the 50S ribosomal subunit. The cofactor is Zn(2+).

In terms of biological role, binds the 23S rRNA. The chain is Large ribosomal subunit protein bL31 from Glaesserella parasuis serovar 5 (strain SH0165) (Haemophilus parasuis).